The primary structure comprises 26 residues: Cytochrome c oxidase subunit 2 (26 aa).

It belongs to the cytochrome c oxidase subunit 2 family. In terms of assembly, component of the cytochrome c oxidase (complex IV, CIV), a multisubunit enzyme composed of a catalytic core of 3 subunits and several supernumerary subunits. The complex exists as a monomer or a dimer and forms supercomplexes (SCs) in the inner mitochondrial membrane with ubiquinol-cytochrome c oxidoreductase (cytochrome b-c1 complex, complex III, CIII). Cu cation serves as cofactor.

Its subcellular location is the mitochondrion inner membrane. It catalyses the reaction 4 Fe(II)-[cytochrome c] + O2 + 8 H(+)(in) = 4 Fe(III)-[cytochrome c] + 2 H2O + 4 H(+)(out). Functionally, component of the cytochrome c oxidase, the last enzyme in the mitochondrial electron transport chain which drives oxidative phosphorylation. The respiratory chain contains 3 multisubunit complexes succinate dehydrogenase (complex II, CII), ubiquinol-cytochrome c oxidoreductase (cytochrome b-c1 complex, complex III, CIII) and cytochrome c oxidase (complex IV, CIV), that cooperate to transfer electrons derived from NADH and succinate to molecular oxygen, creating an electrochemical gradient over the inner membrane that drives transmembrane transport and the ATP synthase. Cytochrome c oxidase is the component of the respiratory chain that catalyzes the reduction of oxygen to water. Electrons originating from reduced cytochrome c in the intermembrane space (IMS) are transferred via the dinuclear copper A center (CU(A)) of subunit 2 and heme A of subunit 1 to the active site in subunit 1, a binuclear center (BNC) formed by heme A3 and copper B (CU(B)). The BNC reduces molecular oxygen to 2 water molecules using 4 electrons from cytochrome c in the IMS and 4 protons from the mitochondrial matrix. In Solanum tuberosum (Potato), this protein is Cytochrome c oxidase subunit 2 (COX2).